The chain runs to 389 residues: Globin-like protein 6 (389 aa).

Residues 1–15 (MGNQSTKSTHGTTRV) show a composition bias toward polar residues. Disordered stretches follow at residues 1-38 (MGNQ…RSAS), 96-123 (RTSK…SVDS), and 143-185 (TVSS…SSNP). A compositionally biased stretch (basic residues) spans 16-25 (SHSKSAHHNS). The Globin domain occupies 196–347 (HLTQPQILFV…VTEQLKEGFQ (152 aa)). Positions 254 and 286 each coordinate heme b. The tract at residues 367–389 (SSFEISTKTKQSDMKRFHTLDNM) is disordered. The segment covering 376–389 (KQSDMKRFHTLDNM) has biased composition (basic and acidic residues).

It belongs to the globin family. As to expression, expressed in the head and tail neurons and nerve cord.

May play a role as physiological sensor for oxygen via redox signaling and/or electron transport. The sequence is that of Globin-like protein 6 from Caenorhabditis elegans.